Reading from the N-terminus, the 119-residue chain is MPKAENKKSRAAEIVTREYTINLHKRLHGVGFKKRAPRAVKEIKKFASKIMGTTDVRVDPRLNKFVWNQGIRSVPYRVRVRLARKRNDDEDAKEKLYTLVTYVPVTSFKGLQTQNVDAE.

The protein belongs to the eukaryotic ribosomal protein eL31 family.

This Cyanophora paradoxa protein is Large ribosomal subunit protein eL31 (RPL31).